Reading from the N-terminus, the 159-residue chain is Ribosomal RNA large subunit methyltransferase H (159 aa).

The S-adenosyl-L-methionine site is built by L76 and G108.

It belongs to the RNA methyltransferase RlmH family. In terms of assembly, homodimer.

It localises to the cytoplasm. The catalysed reaction is pseudouridine(1915) in 23S rRNA + S-adenosyl-L-methionine = N(3)-methylpseudouridine(1915) in 23S rRNA + S-adenosyl-L-homocysteine + H(+). Its function is as follows. Specifically methylates the pseudouridine at position 1915 (m3Psi1915) in 23S rRNA. The polypeptide is Ribosomal RNA large subunit methyltransferase H (Limosilactobacillus fermentum (strain NBRC 3956 / LMG 18251) (Lactobacillus fermentum)).